Reading from the N-terminus, the 463-residue chain is MPPPSLLLLHPRTPLPHHHRSSFRTSSPRPSRMVCAAAEGFISAAPILLPDGPWKQVEGGVTAAKGFKAAGIYGGLRAKGEKPDLALVACDVDATVAGAFTTNVVAAAPVLYCKRVLNSSKTARAVLINAGQANAATGDAGYQDTVDSADAVAKLLNVSTNDILIQSTGVIGQRIKKEALVNSLHRLVGSLSSSIEGANSAAVAITTTDLVSKSIAVQTEIGGVPIKIGGMAKGSGMIHPNMATMLGVLTTDAQVSSDVWREMVRTSVSRSFNQITVDGDTSTNDCVIALASGLSGLSSILTHDSTEAQQFQACLDAVMQGLAKSIAWDGEGATCLIEVTVAGANNEAEAAKIARSVASSSLVKAAVFGRDPNWGRIACSVGYSGIQFDADQLDISLGAIPLMKNGQPLPFDRSAASKYLKDAGDIHGTVNIDVSVGRGGGSGKAWGCDLSYKYVEINAEYTT.

Positions 207, 233, 244, 331, 458, and 463 each coordinate substrate. The active-site Nucleophile is the Thr244.

It belongs to the ArgJ family. As to quaternary structure, heterodimer of an alpha and a beta chain.

Its subcellular location is the plastid. It is found in the chloroplast. It catalyses the reaction N(2)-acetyl-L-ornithine + L-glutamate = N-acetyl-L-glutamate + L-ornithine. The enzyme catalyses L-glutamate + acetyl-CoA = N-acetyl-L-glutamate + CoA + H(+). The protein operates within amino-acid biosynthesis; L-arginine biosynthesis; L-ornithine and N-acetyl-L-glutamate from L-glutamate and N(2)-acetyl-L-ornithine (cyclic): step 1/1. Its pathway is amino-acid biosynthesis; L-arginine biosynthesis; N(2)-acetyl-L-ornithine from L-glutamate: step 1/4. Functionally, catalyzes two activities which are involved in the cyclic version of arginine biosynthesis: the synthesis of acetylglutamate from glutamate and acetyl-CoA, and of ornithine by transacetylation between acetylornithine and glutamate. The polypeptide is Arginine biosynthesis bifunctional protein ArgJ, chloroplastic (Oryza sativa subsp. japonica (Rice)).